The following is a 339-amino-acid chain: Transmembrane protein 120B (339 aa).

The stretch at 1 to 77 forms a coiled coil; sequence MSGQLERCER…ASREEAELVQ (77 aa). 6 consecutive transmembrane segments (helical) span residues 102–124, 132–152, 159–179, 187–207, 270–290, and 302–322; these read GLYL…AKFA, FKLY…FVLH, VFNF…SILI, GWWV…LTWP, FLLP…VTLF, and QVFV…LTTL.

This sequence belongs to the TMEM120 family. Heterooligomer with TMEM120A.

It localises to the nucleus inner membrane. Functionally, necessary for efficient adipogenesis. Does not show ion channel activity. The chain is Transmembrane protein 120B from Homo sapiens (Human).